Reading from the N-terminus, the 326-residue chain is MSTNLKYLSLGILVFQTTSLVLTMRYSRTLKEEGPRYLSSTAVVVAELLKIMACILLVYKDSKCSLRALNRILHDEILNKPMETLKLAIPSGIYTLQNNLLYVALSNLDAATYQVTYQLKILTTALFSVSMLSKKLGVYQWLSLVILMTGVAFVQWPSDSQELDSKELSAGSQFVGLMAVLTACFSSGFAGVYFEKILKETKQSVWIRNIQLGFFGSIFGLMGVYIYDGELVSKNGFFQGYNRLTWIVVILQALGGLVIAAVIKYADNILKGFATSLSIILSTLISYFWLQDFVPTSVFFLGAILVITATFLYGYDPKPTGNPTKA.

Helical transmembrane passes span 8–24, 42–58, 138–154, 174–190, 210–226, 247–263, 269–285, and 296–312; these read LSLG…VLTM, AVVV…ILLV, VYQW…VAFV, FVGL…SGFA, IQLG…GVYI, IVVI…AAVI, ILKG…STLI, and TSVF…ATFL.

Belongs to the nucleotide-sugar transporter family. SLC35A subfamily. In terms of assembly, interacts with SLC35A2; the interaction is reduced in the presence of SLC35A4. Found in a complex with SLC35A2 and SLC35A4.

Its subcellular location is the golgi apparatus membrane. In terms of biological role, uridine diphosphate-N-acetylglucosamine (UDP-GlcNAc) transporter in the Golgi apparatus. May supply UDP-GlcNAc as substrate for Golgi-resident glycosyltransferases that generate branching of diantennary oligosaccharides. This chain is UDP-N-acetylglucosamine transporter (SLC35A3), found in Canis lupus familiaris (Dog).